A 2551-amino-acid polypeptide reads, in one-letter code: Probable polyketide synthase 13 (2551 aa).

The region spanning 10 to 434 (ENDVAIIGIG…GSNCCLILSQ (425 aa)) is the Ketosynthase family 3 (KS3) domain. Active-site for beta-ketoacyl synthase activity residues include cysteine 176, histidine 317, and histidine 358. Residues 621–654 (GIEVSFIIGHSLGEIPAAYCSGMINIDTLCYLIY) form an acyl/malonyl transferase region. The For acyl/malonyl transferase activity role is filled by serine 631. The N-terminal hotdog fold stretch occupies residues 928 to 1057 (TDNLGYLNEN…GDFQLSNHSS (130 aa)). The 299-residue stretch at 928 to 1226 (TDNLGYLNEN…CTSLTPIKES (299 aa)) folds into the PKS/mFAS DH domain. Histidine 961 serves as the catalytic Proton acceptor; for dehydratase activity. Residues 1076–1226 (NLTKLSRDEL…CTSLTPIKES (151 aa)) are C-terminal hotdog fold. The active-site Proton donor; for dehydratase activity is aspartate 1136. The region spanning 2465–2542 (DCQTIIKDSF…SSIQYTINSF (78 aa)) is the Carrier domain. An O-(pantetheine 4'-phosphoryl)serine modification is found at serine 2502.

Pantetheine 4'-phosphate is required as a cofactor.

Its function is as follows. Probable polyketide synthase. The polypeptide is Probable polyketide synthase 13 (pks13) (Dictyostelium discoideum (Social amoeba)).